A 738-amino-acid chain; its full sequence is Catalase-peroxidase (738 aa).

Gly residues predominate over residues 1–13 (MDGQDIGAGGGCP). Residues 1–26 (MDGQDIGAGGGCPFSGANTNKGRRSN) are disordered. The segment at residues 98 to 226 (WHSAGTYRTA…LAAVQMGLIY (129 aa)) is a cross-link (tryptophyl-tyrosyl-methioninium (Trp-Tyr) (with M-252)). Residue H99 is the Proton acceptor of the active site. The tryptophyl-tyrosyl-methioninium (Tyr-Met) (with W-98) cross-link spans 226–252 (YVNPEGPDGNPDPIASGRDIRETFARM). H267 contacts heme b.

Belongs to the peroxidase family. Peroxidase/catalase subfamily. As to quaternary structure, homodimer or homotetramer. Heme b serves as cofactor. Formation of the three residue Trp-Tyr-Met cross-link is important for the catalase, but not the peroxidase activity of the enzyme.

The enzyme catalyses H2O2 + AH2 = A + 2 H2O. It carries out the reaction 2 H2O2 = O2 + 2 H2O. In terms of biological role, bifunctional enzyme with both catalase and broad-spectrum peroxidase activity. This is Catalase-peroxidase from Ruegeria sp. (strain TM1040) (Silicibacter sp.).